A 226-amino-acid chain; its full sequence is PKHD-type hydroxylase Abu_0724 (226 aa).

In terms of domain architecture, Fe2OG dioxygenase spans His78 to Ser178. Residues His96, Asp98, and His159 each contribute to the Fe cation site. Arg169 contributes to the 2-oxoglutarate binding site.

The cofactor is Fe(2+). L-ascorbate is required as a cofactor.

This Aliarcobacter butzleri (strain RM4018) (Arcobacter butzleri) protein is PKHD-type hydroxylase Abu_0724.